We begin with the raw amino-acid sequence, 261 residues long: Cytochrome c oxidase subunit 3 (261 aa).

The Mitochondrial matrix segment spans residues 1–15 (MTRQTHAYHMVNPSP). Residues 16–34 (WPLTGALSALLMTSGLIMW) form a helical membrane-spanning segment. Residues 35-40 (FHFNST) lie on the Mitochondrial intermembrane side of the membrane. Residues 41–66 (ILLMLGLTTNMLTMYQWWRDVIREST) form a helical membrane-spanning segment. At 67-72 (FQGHHT) the chain is on the mitochondrial matrix side. Residues 73–105 (PNVQKGLRYGMILFIISEVLFFTGFFWAFYHSS) form a helical membrane-spanning segment. Residues 106-128 (LAPTPELGGCWPPTGIHPLNPLE) are Mitochondrial intermembrane-facing. The helical transmembrane segment at 129-152 (VPLLNTSVLLASGVSITWAHHSLM) threads the bilayer. The Mitochondrial matrix segment spans residues 153–155 (EGN). A helical transmembrane segment spans residues 156 to 183 (RNHMLQALFITIALGVYFTLLQASEYYE). The Mitochondrial intermembrane segment spans residues 184 to 190 (APFTISD). The helical transmembrane segment at 191 to 223 (GVYGSTFFVATGFHGLHVIIGSTFLIVCFFRQL) threads the bilayer. Residues 224–232 (KFHFTSNHH) lie on the Mitochondrial matrix side of the membrane. The helical transmembrane segment at 233–256 (FGFEAAAWYWHFVDVVWLFLYVSI) threads the bilayer. Residues 257–261 (YWWGS) lie on the Mitochondrial intermembrane side of the membrane.

Belongs to the cytochrome c oxidase subunit 3 family. Component of the cytochrome c oxidase (complex IV, CIV), a multisubunit enzyme composed of 14 subunits. The complex is composed of a catalytic core of 3 subunits MT-CO1, MT-CO2 and MT-CO3, encoded in the mitochondrial DNA, and 11 supernumerary subunits COX4I, COX5A, COX5B, COX6A, COX6B, COX6C, COX7A, COX7B, COX7C, COX8 and NDUFA4, which are encoded in the nuclear genome. The complex exists as a monomer or a dimer and forms supercomplexes (SCs) in the inner mitochondrial membrane with NADH-ubiquinone oxidoreductase (complex I, CI) and ubiquinol-cytochrome c oxidoreductase (cytochrome b-c1 complex, complex III, CIII), resulting in different assemblies (supercomplex SCI(1)III(2)IV(1) and megacomplex MCI(2)III(2)IV(2)).

The protein localises to the mitochondrion inner membrane. It carries out the reaction 4 Fe(II)-[cytochrome c] + O2 + 8 H(+)(in) = 4 Fe(III)-[cytochrome c] + 2 H2O + 4 H(+)(out). Component of the cytochrome c oxidase, the last enzyme in the mitochondrial electron transport chain which drives oxidative phosphorylation. The respiratory chain contains 3 multisubunit complexes succinate dehydrogenase (complex II, CII), ubiquinol-cytochrome c oxidoreductase (cytochrome b-c1 complex, complex III, CIII) and cytochrome c oxidase (complex IV, CIV), that cooperate to transfer electrons derived from NADH and succinate to molecular oxygen, creating an electrochemical gradient over the inner membrane that drives transmembrane transport and the ATP synthase. Cytochrome c oxidase is the component of the respiratory chain that catalyzes the reduction of oxygen to water. Electrons originating from reduced cytochrome c in the intermembrane space (IMS) are transferred via the dinuclear copper A center (CU(A)) of subunit 2 and heme A of subunit 1 to the active site in subunit 1, a binuclear center (BNC) formed by heme A3 and copper B (CU(B)). The BNC reduces molecular oxygen to 2 water molecules using 4 electrons from cytochrome c in the IMS and 4 protons from the mitochondrial matrix. This Eudorcas rufifrons (Red-fronted gazelle) protein is Cytochrome c oxidase subunit 3 (MT-CO3).